A 795-amino-acid chain; its full sequence is Protein Jade-3 (795 aa).

Over residues 1–25 (MKRLRTPSSSDSSDNESPSTSFSSN) the composition is skewed to low complexity. Residues 1 to 41 (MKRLRTPSSSDSSDNESPSTSFSSNKYGSKPGTPASAQKKP) form a disordered region. The PHD-type 1 zinc finger occupies 201 to 251 (DVICDVCRSPDSEEGNDMVFCDKCNICVHQACYGIVKVPDGNWLCRTCVLG). The segment at 253–287 (TPQCLLCPKTGGAMKATRAGTKWAHVSCALWIPEV) adopts a C2HC pre-PHD-type zinc-finger fold. The PHD-type 2 zinc-finger motif lies at 311–367 (LICSLCKLKTGACIQCSVKNCTIPFHVTCAFEHSLEMKTILDEGDEVKFKSYCLKHS). Disordered regions lie at residues 630–654 (HGQS…NGIL), 667–687 (AASE…SGFH), and 714–795 (FEKN…SVQR). 2 stretches are compositionally biased toward polar residues: residues 678-687 (SGKSQSSGFH) and 720-732 (KSSG…STER).

Belongs to the JADE family. As to quaternary structure, component of the HBO1 complex.

Its function is as follows. Scaffold subunit of some HBO1 complexes, which have a histone H4 acetyltransferase activity. This Danio rerio (Zebrafish) protein is Protein Jade-3 (jade3).